Consider the following 973-residue polypeptide: Sodium/calcium exchanger 1 (973 aa).

The first 35 residues, 1–35 (MYNMRRLSLSPTFSMGFHLLVTVSLLFSHVDHVIA), serve as a signal peptide directing secretion. Over 36–74 (ETEMEGEGNETGECTGSYYCKKGVILPIWEPQDPSFGDK) the chain is Extracellular. N-linked (GlcNAc...) asparagine glycosylation is present at asparagine 44. Residues 75-95 (IARATVYFVAMVYMFLGVSII) form a helical membrane-spanning segment. Residues 96-136 (ADRFMSSIEVITSQEKEITIKKPNGETTKTTVRIWNETVSN) lie on the Cytoplasmic side of the membrane. The chain crosses the membrane as a helical span at residues 137-157 (LTLMALGSSAPEILLSVIEVC). The Alpha-1 repeat unit spans residues 141 to 181 (ALGSSAPEILLSVIEVCGHNFTAGDLGPSTIVGSAAFNMFI). The Extracellular portion of the chain corresponds to 158–170 (GHNFTAGDLGPST). Residue asparagine 160 is glycosylated (N-linked (GlcNAc...) asparagine). A helical membrane pass occupies residues 171–191 (IVGSAAFNMFIIIALCVYVVP). The Cytoplasmic portion of the chain corresponds to 192 to 204 (DGETRKIKHLRVF). Residues 205-225 (FVTAAWSIFAYTWLYIILSVI) form a helical membrane-spanning segment. The Extracellular portion of the chain corresponds to 226–231 (SPGVVE). The chain crosses the membrane as a helical span at residues 232–252 (VWEGLLTFFFFPICVVFAWVA). Over 253-800 (DRRLLFYKYV…FVPPTEYWNG (548 aa)) the chain is Cytoplasmic. Residues 254-273 (RRLLFYKYVYKRYRAGKQRG) form a putative calmodulin-binding region region. Serine 285 and serine 392 each carry phosphoserine. 2 Calx-beta domains span residues 396–496 (VNTE…VHLS) and 527–627 (ATVT…LEIG). 16 residues coordinate Ca(2+): glutamate 420, aspartate 456, aspartate 481, aspartate 482, isoleucine 484, glutamate 486, glutamate 489, aspartate 533, aspartate 534, aspartate 535, glutamate 551, aspartate 587, aspartate 613, glutamate 614, glutamate 615, and glutamate 718. Residues 801-821 (WACFIVSILMIGLLTAFIGDL) traverse the membrane as a helical segment. Topologically, residues 822–824 (ASH) are extracellular. Residues 825–845 (FGCTIGLKDSVTAVVFVALGT) form a helical membrane-spanning segment. One copy of the Alpha-2 repeat lies at 842–878 (ALGTSVPDTFASKVAATQDQYADASIGNVTGSNAVNV). At 846 to 874 (SVPDTFASKVAATQDQYADASIGNVTGSN) the chain is on the cytoplasmic side. A helical transmembrane segment spans residues 875–895 (AVNVFLGIGVAWSIAAIYHAA). Topologically, residues 896–906 (NGEQFKVSPGT) are extracellular. The helical transmembrane segment at 907 to 927 (LAFSVTLFTIFAFINVGVLLY) threads the bilayer. The Cytoplasmic portion of the chain corresponds to 928-944 (RRRPEIGGELGGPRTAK). Residues 945–965 (LLTSCLFVLLWLLYIFFSSLE) form a helical membrane-spanning segment. The Extracellular segment spans residues 966–973 (AYCHIKGF).

It belongs to the Ca(2+):cation antiporter (CaCA) (TC 2.A.19) family. SLC8 subfamily. Detected primarily in heart and at lower levels in brain. Expressed in cardiac sarcolemma, brain, kidney, liver, pancreas, skeletal muscle, placenta and lung.

The protein resides in the cell membrane. The catalysed reaction is Ca(2+)(in) + 3 Na(+)(out) = Ca(2+)(out) + 3 Na(+)(in). Activated by micromolar levels of Ca(2+). Functionally, mediates the exchange of one Ca(2+) ion against three to four Na(+) ions across the cell membrane, and thereby contributes to the regulation of cytoplasmic Ca(2+) levels and Ca(2+)-dependent cellular processes. Contributes to Ca(2+) transport during excitation-contraction coupling in muscle. In a first phase, voltage-gated channels mediate the rapid increase of cytoplasmic Ca(2+) levels due to release of Ca(2+) stores from the endoplasmic reticulum. SLC8A1 mediates the export of Ca(2+) from the cell during the next phase, so that cytoplasmic Ca(2+) levels rapidly return to baseline. Required for normal embryonic heart development and the onset of heart contractions. This Homo sapiens (Human) protein is Sodium/calcium exchanger 1 (SLC8A1).